The chain runs to 275 residues: Anthracycline biosynthesis protein DauV (275 aa).

VOC domains lie at 8–136 (APAW…VWRK) and 150–263 (SVGW…VVEL).

The protein operates within antibiotic biosynthesis; daunorubicin biosynthesis. Its pathway is antibiotic biosynthesis; carminomycin biosynthesis. Functionally, involved in the biosynthesis of the anthracyclines carminomycin and daunorubicin (daunomycin) which are aromatic polyketide antibiotics that exhibit high cytotoxicity and are widely applied in the chemotherapy of a variety of cancers. Acts jointly with DoxA in the conversion of 13-deoxycarminomycin and 13-deoxydaunorubicin to yield carminomycin and daunorubicin, respectively. The protein is Anthracycline biosynthesis protein DauV (dauV) of Streptomyces sp. (strain C5).